A 214-amino-acid chain; its full sequence is Redox-sensing transcriptional repressor Rex (214 aa).

The segment at residues 17-56 is a DNA-binding region (H-T-H motif); it reads LYYRIFKRFYADQVEKASSKQIADAMGIDSATVRRDFSYF. 91–96 lines the NAD(+) pocket; the sequence is GCGNIG.

It belongs to the transcriptional regulatory Rex family. Homodimer.

The protein resides in the cytoplasm. Modulates transcription in response to changes in cellular NADH/NAD(+) redox state. The protein is Redox-sensing transcriptional repressor Rex of Streptococcus equi subsp. zooepidemicus (strain H70).